Here is a 513-residue protein sequence, read N- to C-terminus: Putative thymidine phosphorylase 2 (513 aa).

It belongs to the thymidine/pyrimidine-nucleoside phosphorylase family. Type 2 subfamily.

The catalysed reaction is thymidine + phosphate = 2-deoxy-alpha-D-ribose 1-phosphate + thymine. The sequence is that of Putative thymidine phosphorylase 2 from Acidovorax sp. (strain JS42).